Consider the following 216-residue polypeptide: ATP-dependent Clp protease proteolytic subunit (216 aa).

S101 functions as the Nucleophile in the catalytic mechanism. Residue H126 is part of the active site.

The protein belongs to the peptidase S14 family. Component of the chloroplastic Clp protease core complex.

The protein localises to the plastid. The protein resides in the chloroplast stroma. The catalysed reaction is Hydrolysis of proteins to small peptides in the presence of ATP and magnesium. alpha-casein is the usual test substrate. In the absence of ATP, only oligopeptides shorter than five residues are hydrolyzed (such as succinyl-Leu-Tyr-|-NHMec, and Leu-Tyr-Leu-|-Tyr-Trp, in which cleavage of the -Tyr-|-Leu- and -Tyr-|-Trp bonds also occurs).. In terms of biological role, cleaves peptides in various proteins in a process that requires ATP hydrolysis. Has a chymotrypsin-like activity. Plays a major role in the degradation of misfolded proteins. The polypeptide is ATP-dependent Clp protease proteolytic subunit (Oryza nivara (Indian wild rice)).